We begin with the raw amino-acid sequence, 188 residues long: Ribosome-recycling factor (188 aa).

Belongs to the RRF family.

The protein resides in the cytoplasm. Responsible for the release of ribosomes from messenger RNA at the termination of protein biosynthesis. May increase the efficiency of translation by recycling ribosomes from one round of translation to another. This Cereibacter sphaeroides (strain ATCC 17029 / ATH 2.4.9) (Rhodobacter sphaeroides) protein is Ribosome-recycling factor.